The primary structure comprises 835 residues: Ribonuclease R (835 aa).

Residues 267–593 form the RNB domain; the sequence is RVDLRELPLV…LLHRAIKYLI (327 aa). The S1 motif domain occupies 652–733; the sequence is GDELEGVIAN…DDKQIDFELV (82 aa). Over residues 739–754 the composition is skewed to basic and acidic residues; it reads LRGEGKTAKKRAAEAK. The tract at residues 739 to 835 is disordered; it reads LRGEGKTAKK…KTKRTKQDAQ (97 aa). Residues 755 to 764 show a composition bias toward basic residues; it reads RKAKEKKRAA. A compositionally biased stretch (low complexity) spans 765 to 777; that stretch reads TRSSSKESATARA. The span at 783 to 793 shows a compositional bias: basic and acidic residues; the sequence is PTKRPEQTDSG. Positions 809-829 are enriched in basic residues; sequence KPKVKKAHKKKPHSKPKKTKR.

This sequence belongs to the RNR ribonuclease family. RNase R subfamily.

It is found in the cytoplasm. It carries out the reaction Exonucleolytic cleavage in the 3'- to 5'-direction to yield nucleoside 5'-phosphates.. Functionally, 3'-5' exoribonuclease that releases 5'-nucleoside monophosphates and is involved in maturation of structured RNAs. This chain is Ribonuclease R, found in Vibrio parahaemolyticus serotype O3:K6 (strain RIMD 2210633).